We begin with the raw amino-acid sequence, 299 residues long: Recombination-associated protein RdgC (299 aa).

The protein belongs to the RdgC family.

Its subcellular location is the cytoplasm. The protein localises to the nucleoid. Its function is as follows. May be involved in recombination. The sequence is that of Recombination-associated protein RdgC from Neisseria meningitidis serogroup B (strain ATCC BAA-335 / MC58).